A 230-amino-acid chain; its full sequence is Methyltransferase aurB (230 aa).

It belongs to the methyltransferase superfamily.

It functions in the pathway polyketide biosynthesis. Functionally, methyltransferase; part of the gene cluster that mediates the biosynthesis of aurovertins, fungal polyketides that exhibit potent inhibition of adenosine triphosphate synthase. Tha biosynthesis starts with the HR-PKS aurA that selects propionate as the starter unit; synthesizes a hexa-ene chain through the repeated functions of the KR and DH domains in the first six iterations; selectively introduces three alpha-methyl substitutions at C4, C6, and C16 using the S-adensylmethionine-dependent cMET; and shuts off KR and DH in the last three iterations to afford a 1,3,5-triketo portion that can undergo intramolecular cyclization to yield the alpha-pyrone intermediate. AurE may act as a cyclase and enhances the rate of pyrone formation and product release of aurA. The methyltransferase aurB then methylates the C17 hydroxyl group. C17 methylation is required to initiate epoxidation by the downstream monooxygenase aurC. The monooxygenase aurC and the epoxide hydrolase aurD can iteratively transform the terminal triene portion of the methylated precursor into the dioxabicyclo[3.2.1]octane scaffold of aurovertin E. Epoxidation modifications of the precursor occur in two separate steps; bis-epoxidation of the two terminal olefins takes place first, followed by another epoxidation that occurs at C7-C8 after tetrahydrofuran formation. The O-acyltransferase aurG converts aurovertin E to aurovertin A. This Calcarisporium arbuscula (Dendryphion arbuscula) protein is Methyltransferase aurB.